We begin with the raw amino-acid sequence, 690 residues long: Xylosyl- and glucuronyltransferase LARGE2 (690 aa).

Residues 1 to 7 (MLPRGRP) lie on the Cytoplasmic side of the membrane. A helical; Signal-anchor for type II membrane protein transmembrane segment spans residues 8–28 (RALGAALLLLLLLVVGFFLFG). The Lumenal segment spans residues 29–690 (RDPEYGLGTT…TALQQSRSRA (662 aa)). Asn50 and Asn77 each carry an N-linked (GlcNAc...) asparagine glycan. A xylosyltransferase activity region spans residues 67 to 342 (LHVAIVCAGY…FLGFDGKLLC (276 aa)). Mn(2+)-binding residues include Asp171 and Asp173. A glycan (N-linked (GlcNAc...) asparagine) is linked at Asn201. The interval 343 to 686 (RELFGCPNQF…LKYLTALQQS (344 aa)) is glucuronyltransferase activity. Residues Asp491 and Asp493 each contribute to the Mn(2+) site.

The protein in the C-terminal section; belongs to the glycosyltransferase 49 family. This sequence in the N-terminal section; belongs to the glycosyltransferase 8 family. Interacts with B4GAT1. It depends on Mn(2+) as a cofactor.

It is found in the golgi apparatus membrane. The catalysed reaction is 3-O-[beta-D-GlcA-(1-&gt;3)-beta-D-Xyl-(1-&gt;4)-Rib-ol-P-Rib-ol-P-3-beta-D-GalNAc-(1-&gt;3)-beta-D-GlcNAc-(1-&gt;4)-(O-6-P-alpha-D-Man)]-Thr-[protein] + UDP-alpha-D-xylose = 3-O-[alpha-D-Xyl-(1-&gt;3)-beta-D-GlcA-(1-&gt;4)-beta-D-Xyl-(1-&gt;4)-Rib-ol-P-Rib-ol-P-3-beta-D-GalNAc-(1-&gt;3)-beta-D-GlcNAc-(1-&gt;4)-(O-6-P-alpha-D-Man)]-Thr-[protein] + UDP + H(+). The enzyme catalyses 3-O-{(1-&gt;[3)-alpha-D-Xyl-(1-&gt;3)-beta-D-GlcA-(1-&gt;](n)-4)-beta-D-Xyl-(1-&gt;4)-Rib-ol-P-Rib-ol-P-3-beta-D-GalNAc-(1-&gt;3)-beta-D-GlcNAc-(1-&gt;4)-O-6-P-alpha-D-Man}-L-Thr-[protein] + UDP-alpha-D-glucuronate = 3-O-{beta-D-GlcA-(1-&gt;[3)-alpha-D-Xyl-(1-&gt;3)-beta-D-GlcA-(1-&gt;](n)-4)-beta-D-Xyl-(1-&gt;4)-Rib-ol-P-Rib-ol-P-3-beta-D-GalNAc-(1-&gt;3)-beta-D-GlcNAc-(1-&gt;4)-O-6-P-alpha-D-Man}-L-Thr-[protein] + UDP + H(+). It catalyses the reaction 3-O-{beta-D-GlcA-(1-&gt;[3)-alpha-D-Xyl-(1-&gt;3)-beta-D-GlcA-(1-&gt;](n)-4)-beta-D-Xyl-(1-&gt;4)-Rib-ol-P-Rib-ol-P-3-beta-D-GalNAc-(1-&gt;3)-beta-D-GlcNAc-(1-&gt;4)-O-6-P-alpha-D-Man}-L-Thr-[protein] + UDP-alpha-D-xylose = 3-O-{(1-&gt;[3)-alpha-D-Xyl-(1-&gt;3)-beta-D-GlcA-(1-&gt;](n+1)-4)-beta-D-Xyl-(1-&gt;4)-Rib-ol-P-Rib-ol-P-3-beta-D-GalNAc-(1-&gt;3)-beta-D-GlcNAc-(1-&gt;4)-O-6-P-alpha-D-Man}-L-Thr-[protein] + UDP + H(+). The protein operates within protein modification; protein glycosylation. Functionally, bifunctional glycosyltransferase with both alpha-1,3-xylosyltransferase and beta-1,3-glucuronyltransferase activities involved in the maturation of alpha-dystroglycan (DAG1) by glycosylation leading to DAG1 binding to laminin G-like domain-containing extracellular proteins with high affinity and in a phosphorylated-O-mannosyl trisaccharide dependent manner. Elongates the glucuronyl-beta-1,4-xylose-beta disaccharide primer structure by adding repeating units [-3-Xylose-alpha-1,3-GlcA-beta-1-] to produce a heteropolysaccharide. Supports the maturation of DAG1 more effectively than LARGE1. In addition, can modify both heparan sulfate (HS)- and chondroitin/dermatan sulfate (CS/DS)-proteoglycans (PGs), namely GPC4, with a glycosaminoglycan (GAG)-like polysaccharide composed of xylose and glucuronic acid to confer laminin binding. The polypeptide is Xylosyl- and glucuronyltransferase LARGE2 (Rattus norvegicus (Rat)).